The following is a 427-amino-acid chain: Probable fatty acid methyltransferase Rv3720 (427 aa).

Residues Tyr-167–Thr-168, Leu-202–Gly-210, and Thr-227–Gln-232 each bind S-adenosyl-L-methionine.

This sequence belongs to the CFA/CMAS family.

May be a S-adenosylmethionine-dependent methyltransferase involved in fatty acid metabolism. This is Probable fatty acid methyltransferase Rv3720 from Mycobacterium tuberculosis (strain ATCC 25618 / H37Rv).